Reading from the N-terminus, the 156-residue chain is Glycine cleavage system H protein 2, mitochondrial (156 aa).

Residues 1–23 (MACRLFWASRVASHLRISVAQRG) constitute a mitochondrion transit peptide. Positions 47 to 129 (KATFGITDHA…YEQGWIIKVE (83 aa)) constitute a Lipoyl-binding domain. N6-lipoyllysine is present on Lys88. Ser131 is subject to Phosphoserine.

Belongs to the GcvH family. The glycine cleavage system is composed of four proteins: P, T, L and H. It depends on (R)-lipoate as a cofactor.

Its subcellular location is the mitochondrion. In terms of biological role, the glycine decarboxylase (GDC) or glycine cleavage system catalyzes the degradation of glycine. The H protein shuttles the methylamine group of glycine from the P protein to the T protein. The protein is Glycine cleavage system H protein 2, mitochondrial (GDH2) of Arabidopsis thaliana (Mouse-ear cress).